Consider the following 993-residue polypeptide: NACHT, LRR and PYD domains-containing protein 14 (993 aa).

The 323-residue stretch at 81-403 (QTVVLQGAAG…FYLLRENLEE (323 aa)) folds into the NACHT domain. 87-94 (GAAGIGKT) contributes to the ATP binding site. LRR repeat units lie at residues 636–657 (DLKE…LKCK), 660–680 (KLRV…QKLS), 688–708 (SLVF…KSLC), 717–738 (SLER…VLSS), 745–765 (RLTH…KLLS), 774–795 (TLQS…HLST), 802–822 (SLVH…KLLC), 831–852 (NLQE…DLAS), and 859–879 (NLWS…NILC).

It belongs to the NLRP family. Detected in adult ovary and testis. Detected in oocytes and in germ cell elements in seminiferous tubules in adult testis (at protein level).

It is found in the cytoplasm. May be involved in inflammation and spermatogenesis. The protein is NACHT, LRR and PYD domains-containing protein 14 (Nlrp14) of Mus musculus (Mouse).